Reading from the N-terminus, the 223-residue chain is Serum amyloid P-component (223 aa).

Positions 1 to 19 (MNKPLLWISVLTSLLEAFA) are cleaved as a signal peptide. A Pentraxin (PTX) domain is found at 24-223 (SGKVFVFPRE…YVIIKPLVWV (200 aa)). N-linked (GlcNAc...) asparagine glycosylation occurs at Asn-51. Cys-55 and Cys-114 are disulfide-bonded. Ca(2+)-binding residues include Asp-77, Asn-78, Glu-155, Gln-156, Asp-157, and Gln-167.

This sequence belongs to the pentraxin family. As to quaternary structure, homopentamer. Pentraxin (or pentaxin) have a discoid arrangement of 5 non-covalently bound subunits. Requires Ca(2+) as cofactor. Post-translationally, N-glycosylated with a complex biantennary oligosaccharide chain with a sialic acid at the end (disialo-SAP). Monosialo-SAP as well as asioalo-SAP are also detected. Found in serum and urine.

The protein localises to the secreted. Its function is as follows. Can interact with DNA and histones and may scavenge nuclear material released from damaged circulating cells. May also function as a calcium-dependent lectin. This is Serum amyloid P-component (APCS) from Homo sapiens (Human).